Reading from the N-terminus, the 126-residue chain is Fluoride-specific ion channel FluC (126 aa).

2 helical membrane passes run 2 to 22 (IKSL…RWLL) and 36 to 56 (GTLV…AYFL). Residues glycine 75 and serine 78 each contribute to the Na(+) site. 2 helical membrane-spanning segments follow: residues 80-100 (FSTF…IWAL) and 105-125 (VHVI…TILF).

This sequence belongs to the fluoride channel Fluc/FEX (TC 1.A.43) family. Homodimer.

The protein localises to the cell inner membrane. It carries out the reaction fluoride(in) = fluoride(out). With respect to regulation, na(+) is not transported, but it plays an essential structural role and its presence is essential for fluoride channel function. Fluoride-specific ion channel. Important for reducing fluoride concentration in the cell, thus reducing its toxicity. Is highly specific for fluoride ions and cannot transport chloride ions. The chain is Fluoride-specific ion channel FluC from Escherichia coli O1:K1 / APEC.